The primary structure comprises 478 residues: Shikimate biosynthesis protein AroDE (478 aa).

A 3-dehydroquinate dehydratase region spans residues 1-208; sequence MLCTIIRGPS…LNHHYFYNFT (208 aa). Residues Ser21, 29–31, and 55–57 contribute to the 3-dehydroquinate site; these read EMR and TWK. His110 functions as the Proton donor/acceptor; for 3-dehydroquinate dehydratase activity in the catalytic mechanism. The active-site Schiff-base intermediate with substrate; for 3-dehydroquinate dehydratase activity is Lys133. 3-dehydroquinate-binding residues include Arg171 and Gln196. Positions 209-478 are shikimate 5-dehydrogenase; sequence NLSPQSQICA…VLASLFSIAA (270 aa). 226–228 contributes to the shikimate binding site; that stretch reads SIG. Lys277 functions as the Proton acceptor; for shikimate dehydrogenase activity in the catalytic mechanism. 2 residues coordinate shikimate: Asn298 and Asp313. NADP(+) contacts are provided by residues 337 to 341, 360 to 362, and Gly435; these read GAGGA and NRT. Gln442 contacts shikimate.

It in the N-terminal section; belongs to the type-I 3-dehydroquinase family. This sequence in the C-terminal section; belongs to the shikimate dehydrogenase family.

It carries out the reaction 3-dehydroquinate = 3-dehydroshikimate + H2O. It catalyses the reaction shikimate + NADP(+) = 3-dehydroshikimate + NADPH + H(+). It functions in the pathway metabolic intermediate biosynthesis; chorismate biosynthesis; chorismate from D-erythrose 4-phosphate and phosphoenolpyruvate: step 3/7. It participates in metabolic intermediate biosynthesis; chorismate biosynthesis; chorismate from D-erythrose 4-phosphate and phosphoenolpyruvate: step 4/7. In terms of biological role, bifunctional enzyme that catalyzes two sequential steps of the aromatic amino acids biosynthetic pathway. In the first reaction, the AroD domain catalyzes the cis-dehydration of 3-dehydroquinate (DHQ) and introduces the first double bond of the aromatic ring to yield 3-dehydroshikimate; in the second reaction, the AroE domain catalyzes the reversible NADPH linked reduction of 3-dehydroshikimate (DHSA) to yield shikimate (SA). This Chlamydia muridarum (strain MoPn / Nigg) protein is Shikimate biosynthesis protein AroDE.